The following is a 386-amino-acid chain: Ethanolamine kinase 2 (386 aa).

It belongs to the choline/ethanolamine kinase family. Expressed in kidney, liver, ovary, testis and prostate.

It carries out the reaction ethanolamine + ATP = phosphoethanolamine + ADP + H(+). Its pathway is phospholipid metabolism; phosphatidylethanolamine biosynthesis; phosphatidylethanolamine from ethanolamine: step 1/3. In terms of biological role, highly specific for ethanolamine phosphorylation. Does not have choline kinase activity. The chain is Ethanolamine kinase 2 (ETNK2) from Homo sapiens (Human).